Reading from the N-terminus, the 436-residue chain is Trigger factor (436 aa).

The PPIase FKBP-type domain maps to 163 to 248 (GDRVTIDFEG…VKKIEAAHLP (86 aa)).

This sequence belongs to the FKBP-type PPIase family. Tig subfamily.

The protein localises to the cytoplasm. It catalyses the reaction [protein]-peptidylproline (omega=180) = [protein]-peptidylproline (omega=0). Involved in protein export. Acts as a chaperone by maintaining the newly synthesized protein in an open conformation. Functions as a peptidyl-prolyl cis-trans isomerase. The protein is Trigger factor of Polaromonas naphthalenivorans (strain CJ2).